The primary structure comprises 187 residues: Calmodulin-like protein 1 (187 aa).

Ala2 carries the N-acetylalanine modification. EF-hand domains follow at residues 8–43 (EQIG…LGQN), 44–79 (PTEA…KLRD), 81–116 (DSEE…IGER), and 117–152 (LTDE…KKRR). The Ca(2+) site is built by Asp21, Asp23, Asp25, Ser27, Glu32, Asp57, Asp59, Asn61, Asn63, Glu68, Asp94, Asp96, Asn98, Glu105, Asp130, Asp132, Asp134, Gln136, and Glu141. The disordered stretch occupies residues 153–187 (KRIEEKRDHDGGSRTKSAGPSAAPASKRGQKCVIL). Residues 154 to 165 (RIEEKRDHDGGS) show a composition bias toward basic and acidic residues. A compositionally biased stretch (low complexity) spans 169 to 178 (SAGPSAAPAS). Residue Cys184 is modified to Cysteine methyl ester. A lipid anchor (S-farnesyl cysteine) is attached at Cys184. A propeptide spans 185–187 (VIL) (removed in mature form).

It belongs to the calmodulin family.

The protein localises to the membrane. In terms of biological role, calcium-binding protein that binds and activates CAMK1, a calcium/calmodulin-dependent kinase. This is Calmodulin-like protein 1 (CML1) from Oryza sativa subsp. japonica (Rice).